The following is a 326-amino-acid chain: BTB/POZ domain-containing protein At1g21780 (326 aa).

One can recognise a BTB domain in the interval Thr-161 to Phe-228.

As to quaternary structure, homodimer. Interacts with CUL3A and CUL3B.

It participates in protein modification; protein ubiquitination. In terms of biological role, may act as a substrate-specific adapter of an E3 ubiquitin-protein ligase complex (CUL3-RBX1-BTB) which mediates the ubiquitination and subsequent proteasomal degradation of target proteins. The protein is BTB/POZ domain-containing protein At1g21780 of Arabidopsis thaliana (Mouse-ear cress).